Reading from the N-terminus, the 352-residue chain is Fructose-1,6-bisphosphatase class 1 (352 aa).

4 residues coordinate Mg(2+): glutamate 111, aspartate 133, isoleucine 135, and aspartate 136. Substrate contacts are provided by residues aspartate 136–serine 139, asparagine 228, tyrosine 256, and lysine 286. Position 292 (glutamate 292) interacts with Mg(2+).

The protein belongs to the FBPase class 1 family. As to quaternary structure, homotetramer. It depends on Mg(2+) as a cofactor.

It localises to the cytoplasm. It carries out the reaction beta-D-fructose 1,6-bisphosphate + H2O = beta-D-fructose 6-phosphate + phosphate. It participates in carbohydrate biosynthesis; Calvin cycle. This is Fructose-1,6-bisphosphatase class 1 from Crocosphaera subtropica (strain ATCC 51142 / BH68) (Cyanothece sp. (strain ATCC 51142)).